Here is a 115-residue protein sequence, read N- to C-terminus: Iron-sulfur cluster insertion protein ErpA (115 aa).

Iron-sulfur cluster is bound by residues C43, C107, and C109.

This sequence belongs to the HesB/IscA family. As to quaternary structure, homodimer. Iron-sulfur cluster is required as a cofactor.

Its function is as follows. Required for insertion of 4Fe-4S clusters for at least IspG. In Photorhabdus laumondii subsp. laumondii (strain DSM 15139 / CIP 105565 / TT01) (Photorhabdus luminescens subsp. laumondii), this protein is Iron-sulfur cluster insertion protein ErpA.